A 135-amino-acid chain; its full sequence is C-type lectin Cal (135 aa).

4 cysteine pairs are disulfide-bonded: Cys-3–Cys-14, Cys-31–Cys-131, Cys-38–Cys-133, and Cys-106–Cys-123. The C-type lectin domain occupies 10–132 (MNGLCYKIFN…CESKDAFLCQ (123 aa)). Residues Gln-96, Asp-98, Glu-104, Asn-119, and Asp-120 each contribute to the Ca(2+) site. The Galactose-binding motif lies at 96–98 (QPD).

Belongs to the true venom lectin family. As to quaternary structure, homodecamer of disulfide-linked dimers arranged in two pseudo-5-fold symmetric pentamers. Expressed by the venom gland.

It is found in the secreted. In terms of biological role, galactose-binding protein which recognizes specific carbohydrate structures and agglutinates a variety of animal cells by binding to cell-surface glycoproteins and glycolipids. Calcium-dependent lectin. Shows high hemagglutinating activity (MHC=10 ng/ml). This chain is C-type lectin Cal, found in Crotalus atrox (Western diamondback rattlesnake).